The following is a 701-amino-acid chain: Elongation factor G (701 aa).

The tr-type G domain maps to 10-290 (AKVRNIGIMA…AVVDYLPSPL (281 aa)). GTP-binding positions include 19-26 (AHIDAGKT), 83-87 (DTPGH), and 137-140 (NKMD).

It belongs to the TRAFAC class translation factor GTPase superfamily. Classic translation factor GTPase family. EF-G/EF-2 subfamily.

The protein localises to the cytoplasm. Its function is as follows. Catalyzes the GTP-dependent ribosomal translocation step during translation elongation. During this step, the ribosome changes from the pre-translocational (PRE) to the post-translocational (POST) state as the newly formed A-site-bound peptidyl-tRNA and P-site-bound deacylated tRNA move to the P and E sites, respectively. Catalyzes the coordinated movement of the two tRNA molecules, the mRNA and conformational changes in the ribosome. The sequence is that of Elongation factor G from Tropheryma whipplei (strain Twist) (Whipple's bacillus).